The chain runs to 255 residues: Ribosomal RNA small subunit methyltransferase A (255 aa).

6 residues coordinate S-adenosyl-L-methionine: N13, L15, G40, E61, D85, and N103.

The protein belongs to the class I-like SAM-binding methyltransferase superfamily. rRNA adenine N(6)-methyltransferase family. RsmA subfamily.

The protein localises to the cytoplasm. It carries out the reaction adenosine(1518)/adenosine(1519) in 16S rRNA + 4 S-adenosyl-L-methionine = N(6)-dimethyladenosine(1518)/N(6)-dimethyladenosine(1519) in 16S rRNA + 4 S-adenosyl-L-homocysteine + 4 H(+). In terms of biological role, specifically dimethylates two adjacent adenosines (A1518 and A1519) in the loop of a conserved hairpin near the 3'-end of 16S rRNA in the 30S particle. May play a critical role in biogenesis of 30S subunits. This Dechloromonas aromatica (strain RCB) protein is Ribosomal RNA small subunit methyltransferase A.